A 1201-amino-acid polypeptide reads, in one-letter code: DNA-directed RNA polymerase subunit beta' (1201 aa).

Zn(2+) is bound by residues Cys60, Cys62, Cys75, and Cys78. Mg(2+) is bound by residues Asp449, Asp451, and Asp453. Zn(2+) contacts are provided by Cys818, Cys892, Cys899, and Cys902.

The protein belongs to the RNA polymerase beta' chain family. In terms of assembly, the RNAP catalytic core consists of 2 alpha, 1 beta, 1 beta' and 1 omega subunit. When a sigma factor is associated with the core the holoenzyme is formed, which can initiate transcription. Mg(2+) is required as a cofactor. Zn(2+) serves as cofactor.

It carries out the reaction RNA(n) + a ribonucleoside 5'-triphosphate = RNA(n+1) + diphosphate. Functionally, DNA-dependent RNA polymerase catalyzes the transcription of DNA into RNA using the four ribonucleoside triphosphates as substrates. The sequence is that of DNA-directed RNA polymerase subunit beta' from Listeria monocytogenes serotype 4b (strain F2365).